The primary structure comprises 67 residues: DNA-directed RNA polymerase subunit omega (67 aa).

It belongs to the RNA polymerase subunit omega family. RNAP is composed of a core of 2 alpha, a beta and a beta' subunit. The core is associated with a delta subunit, and at least one of epsilon or omega. When a sigma factor is associated with the core the holoenzyme is formed, which can initiate transcription.

The enzyme catalyses RNA(n) + a ribonucleoside 5'-triphosphate = RNA(n+1) + diphosphate. Promotes RNA polymerase assembly. Latches the N- and C-terminal regions of the beta' subunit thereby facilitating its interaction with the beta and alpha subunits. In vitro reconstitution experiments this subunit is dispensible. The protein is DNA-directed RNA polymerase subunit omega (rpoZ) of Bacillus subtilis (strain 168).